Here is a 61-residue protein sequence, read N- to C-terminus: ATP synthase subunit J, mitochondrial (61 aa).

The helical transmembrane segment at 13-32 (LVKYYWPFFVGFGLTFYGVA) threads the bilayer.

As to quaternary structure, F-type ATP synthases have 2 components, the catalytic core F(1) and the membrane-embedded component F(0), linked together by a central stalk and a peripheral stalk. The central stalk, also called rotor shaft, is often seen as part of F(1). The peripheral stalk is seen as part of F(0). F(0) contains the membrane channel next to the rotor. F-type ATP synthases form dimers but each monomer functions independently in ATP generation. The dimer consists of 18 different polypeptides: ATP1 (subunit alpha, part of F(1), 3 molecules per monomer), ATP2 (subunit beta, part of F(1), 3 molecules per monomer), ATP3 (subunit gamma, part of the central stalk), ATP4 (subunit b, part of the peripheral stalk), ATP5/OSCP (subunit 5/OSCP, part of the peripheral stalk), ATP6 (subunit a, part of the peripheral stalk), ATP7 (subunit d, part of the peripheral stalk), ATP8 (subunit 8, part of the peripheral stalk), OLI1 (subunit c, part of the rotor, 10 molecules per monomer), ATP14 (subunit h, part of the peripheral stalk), ATP15 (subunit epsilon, part of the central stalk), ATP16 (subunit delta, part of the central stalk), ATP17 (subunit f, part of the peripheral stalk), ATP18 (subunit i/j, part of the peripheral stalk). Dimer-specific subunits are ATP19 (subunit k, at interface between monomers), ATP20 (subunit g, at interface between monomers), TIM11 (subunit e, at interface between monomers). Also contains subunit L.

The protein resides in the mitochondrion inner membrane. Mitochondrial membrane ATP synthase (F(1)F(0) ATP synthase or Complex V) produces ATP from ADP in the presence of a proton gradient across the membrane which is generated by electron transport complexes of the respiratory chain. F-type ATP synthases consist of two structural domains, F(1) - containing the extramembraneous catalytic core, and F(0) - containing the membrane proton channel, linked together by a central stalk and a peripheral stalk. During catalysis, ATP synthesis in the catalytic domain of F(1) is coupled via a rotary mechanism of the central stalk subunits to proton translocation. Part of the complex F(0) domain. Minor subunit located with subunit a/ATP6 in the membrane. The sequence is that of ATP synthase subunit J, mitochondrial from Pichia angusta (Yeast).